The sequence spans 178 residues: Bifunctional protein PyrR (178 aa).

Positions valine 99 to threonine 111 match the PRPP-binding motif.

Belongs to the purine/pyrimidine phosphoribosyltransferase family. PyrR subfamily.

It catalyses the reaction UMP + diphosphate = 5-phospho-alpha-D-ribose 1-diphosphate + uracil. In terms of biological role, regulates the transcription of the pyrimidine nucleotide (pyr) operon in response to exogenous pyrimidines. Functionally, also displays a weak uracil phosphoribosyltransferase activity which is not physiologically significant. This Nostoc punctiforme (strain ATCC 29133 / PCC 73102) protein is Bifunctional protein PyrR.